The chain runs to 389 residues: Zinc finger C2HC domain-containing protein 1C homolog (389 aa).

Disordered stretches follow at residues 16–44 and 84–115; these read MLPH…SQQS and SYPH…GPQS. 2 stretches are compositionally biased toward polar residues: residues 35–44 and 90–102; these read YEQGDSSQQS and GISQ…DSQG. Residues 211 to 266 adopt a coiled-coil conformation; it reads VQIRRLEAAGESLEEEIRRKQILLRGKLKKTEEELRRIQMQKEQAKENENRELQKI. Disordered regions lie at residues 301 to 320 and 343 to 389; these read REDE…QLSD and SELS…PQLG. Polar residues predominate over residues 307–317; it reads GRSQQNSSPFQ. A compositionally biased stretch (low complexity) spans 368-382; that stretch reads SSLSMAPDSSGSSGS.

It belongs to the ZC2HC1 family.

The protein is Zinc finger C2HC domain-containing protein 1C homolog (ZC2HC1C) of Pongo abelii (Sumatran orangutan).